The following is a 192-amino-acid chain: 7-methyl-GTP pyrophosphatase (192 aa).

Asp-69 serves as the catalytic Proton acceptor.

It belongs to the Maf family. YceF subfamily. A divalent metal cation is required as a cofactor.

The protein resides in the cytoplasm. It catalyses the reaction N(7)-methyl-GTP + H2O = N(7)-methyl-GMP + diphosphate + H(+). Nucleoside triphosphate pyrophosphatase that hydrolyzes 7-methyl-GTP (m(7)GTP). May have a dual role in cell division arrest and in preventing the incorporation of modified nucleotides into cellular nucleic acids. This chain is 7-methyl-GTP pyrophosphatase (maf-1), found in Pseudomonas syringae pv. tomato (strain ATCC BAA-871 / DC3000).